The sequence spans 453 residues: 4,4'-diapolycopene-4,4'-dial dehydrogenase (453 aa).

Residues 1–20 show a composition bias toward basic and acidic residues; that stretch reads MPDNDSHSLKSLPERQREDL. A disordered region spans residues 1–23; it reads MPDNDSHSLKSLPERQREDLFSA. Residues glutamate 215 and cysteine 249 contribute to the active site.

It belongs to the aldehyde dehydrogenase family.

The enzyme catalyses all-trans-4,4'-diapolycopene-4,4'-dial + 2 A + 2 H2O = all-trans-4,4'-diapolycopene-4,4'-dioate + 2 AH2 + 2 H(+). Its pathway is carotenoid biosynthesis. Involved in the biosynthesis of the major C30 carotenoid 4,4'-diapolycopene-4,4'-dioic acid, which protects B.firmus from peroxidative reactions. Catalyzes the oxidation of 4,4'-diapolycopene-4,4'-dial to yield 4,4'-diapolycopene-4,4'-dioic aci. This Cytobacillus firmus (Bacillus firmus) protein is 4,4'-diapolycopene-4,4'-dial dehydrogenase.